The chain runs to 505 residues: N-succinylglutamate 5-semialdehyde dehydrogenase (505 aa).

234–239 (GSAHTG) provides a ligand contact to NAD(+). Catalysis depends on residues Glu257 and Cys291.

Belongs to the aldehyde dehydrogenase family. AstD subfamily.

It catalyses the reaction N-succinyl-L-glutamate 5-semialdehyde + NAD(+) + H2O = N-succinyl-L-glutamate + NADH + 2 H(+). It participates in amino-acid degradation; L-arginine degradation via AST pathway; L-glutamate and succinate from L-arginine: step 4/5. In terms of biological role, catalyzes the NAD-dependent reduction of succinylglutamate semialdehyde into succinylglutamate. This chain is N-succinylglutamate 5-semialdehyde dehydrogenase, found in Yersinia pestis bv. Antiqua (strain Antiqua).